The following is a 765-amino-acid chain: 5-methyltetrahydropteroyltriglutamate--homocysteine methyltransferase (765 aa).

Residues 18 to 21 (REWK) and lysine 114 each bind 5-methyltetrahydropteroyltri-L-glutamate. L-homocysteine contacts are provided by residues 437–439 (IGS) and glutamate 490. Residues 437 to 439 (IGS) and glutamate 490 each bind L-methionine. Residue tryptophan 567 coordinates 5-methyltetrahydropteroyltri-L-glutamate. An L-homocysteine-binding site is contributed by aspartate 605. Aspartate 605 is an L-methionine binding site. Residue glutamate 611 coordinates 5-methyltetrahydropteroyltri-L-glutamate. Zn(2+) is bound by residues histidine 647, cysteine 649, and glutamate 671. Residue histidine 700 is the Proton donor of the active site. Cysteine 732 lines the Zn(2+) pocket.

It belongs to the vitamin-B12 independent methionine synthase family. Requires Zn(2+) as cofactor.

The catalysed reaction is 5-methyltetrahydropteroyltri-L-glutamate + L-homocysteine = tetrahydropteroyltri-L-glutamate + L-methionine. The protein operates within amino-acid biosynthesis; L-methionine biosynthesis via de novo pathway; L-methionine from L-homocysteine (MetE route): step 1/1. Functionally, catalyzes the transfer of a methyl group from 5-methyltetrahydrofolate to homocysteine resulting in methionine formation. The polypeptide is 5-methyltetrahydropteroyltriglutamate--homocysteine methyltransferase (Listeria monocytogenes serotype 4b (strain F2365)).